Consider the following 219-residue polypeptide: uncharacterized protein (219 aa).

This is an uncharacterized protein from Rickettsia prowazekii (strain Madrid E).